A 112-amino-acid polypeptide reads, in one-letter code: Large ribosomal subunit protein eL34A (112 aa).

This sequence belongs to the eukaryotic ribosomal protein eL34 family. As to quaternary structure, component of the large ribosomal subunit (LSU). Mature yeast ribosomes consist of a small (40S) and a large (60S) subunit. The 40S small subunit contains 1 molecule of ribosomal RNA (18S rRNA) and at least 33 different proteins. The large 60S subunit contains 3 rRNA molecules (25S, 5.8S and 5S rRNA) and at least 46 different proteins.

The protein localises to the cytoplasm. Its function is as follows. Component of the ribosome, a large ribonucleoprotein complex responsible for the synthesis of proteins in the cell. The small ribosomal subunit (SSU) binds messenger RNAs (mRNAs) and translates the encoded message by selecting cognate aminoacyl-transfer RNA (tRNA) molecules. The large subunit (LSU) contains the ribosomal catalytic site termed the peptidyl transferase center (PTC), which catalyzes the formation of peptide bonds, thereby polymerizing the amino acids delivered by tRNAs into a polypeptide chain. The nascent polypeptides leave the ribosome through a tunnel in the LSU and interact with protein factors that function in enzymatic processing, targeting, and the membrane insertion of nascent chains at the exit of the ribosomal tunnel. This chain is Large ribosomal subunit protein eL34A (rpl3401), found in Schizosaccharomyces pombe (strain 972 / ATCC 24843) (Fission yeast).